The primary structure comprises 717 residues: HHIP-like protein 2 (717 aa).

A signal peptide spans 1-40 (MLGKHTSPHTVPGHRAPWLSPGIFCLGLPFLLGWVGLLQG). Cystine bridges form between C203-C545, C207-C551, C423-C441, and C508-C607. The interval 642 to 717 (ARKASNATFT…MRQAAGRSHP (76 aa)) is disordered. The span at 646–662 (SNATFTSSSDRVASQKG) shows a compositional bias: polar residues. N647 is a glycosylation site (N-linked (GlcNAc...) asparagine). Positions 672–687 (SSKKTFRRPGTKKKSR) are enriched in basic residues.

This sequence belongs to the HHIP family.

The protein localises to the secreted. The chain is HHIP-like protein 2 (Hhipl2) from Mus musculus (Mouse).